The sequence spans 792 residues: MNEKTHRVLEFDKILDKLKGLTASELGRELVLELTPQTDYRVVEKMLSETNDGVSCIMRRGSPPLGGITDIRMSLKRLDMGGVLNPGELLRLAGVLRAARRLKGYINDKLDENNASVVKELISCLESNQRLEQKIDNCILSEDEIADNASPALSSIRRQIKEQQASIKDKLNSIIRSTKYQKYIQESVVTMRGDRYVIPVKQEHKGDIPGLVHDSSASGATLFIEPMAVVEANNSIKQLRVKEQTEIDRILAELSQDASLVLPQLNANMSIMARLDFIFAKSKLAIDYNCICPKINDTGKIIIKKGRHPLLDPKIVVPIDFWIGEKFSSLIVTGPNTGGKTVSLKTVGLFTLMMQSGLLVPANDGTEMSVFEKIYADIGDEQSIEQSLSTFSSHMKNIVDILSGVNNKSLILLDELGAGTDPTEGAALAMSILECLHQMGATTLATTHYSELKVYAISTTGVENASCEFDVETLRPTYRLLIGVPGKSNAFAISKRLGLTDDIIERSKEFLSQEDIRFEDILLSIEKNRSEAEKEKMRAESYRQEAERLKKDLEDQKRRLAAQKESELRKAREEARRILTDSKRQADELVSEMKRLAKEQEEAEVRRQTEELRQKLNKSINNLDDSLVESIMPRQGLVKPPKNLKPGDTVLIVNLNQKGTVLTLPDKNGEAQVQAGIMKINVHISNLKLVDEQKQQIQRTGMGKIGVSKAQNMSTEIDLRGMMLSEAVDVVDKYLDDASIAGMGGVTLIHGKGTGALRAGLHQHLKHNPHIKSFRLGKLGEGENGVTVVELK.

Residue 334 to 341 (GPNTGGKT) participates in ATP binding. One can recognise a Smr domain in the interval 717-792 (IDLRGMMLSE…ENGVTVVELK (76 aa)).

Belongs to the DNA mismatch repair MutS family. MutS2 subfamily. In terms of assembly, homodimer. Binds to stalled ribosomes, contacting rRNA.

Functionally, endonuclease that is involved in the suppression of homologous recombination and thus may have a key role in the control of bacterial genetic diversity. Its function is as follows. Acts as a ribosome collision sensor, splitting the ribosome into its 2 subunits. Detects stalled/collided 70S ribosomes which it binds and splits by an ATP-hydrolysis driven conformational change. Acts upstream of the ribosome quality control system (RQC), a ribosome-associated complex that mediates the extraction of incompletely synthesized nascent chains from stalled ribosomes and their subsequent degradation. Probably generates substrates for RQC. The sequence is that of Endonuclease MutS2 from Ruminiclostridium cellulolyticum (strain ATCC 35319 / DSM 5812 / JCM 6584 / H10) (Clostridium cellulolyticum).